The sequence spans 321 residues: Gap junction delta-2 protein (321 aa).

Residues 1-19 are Cytoplasmic-facing; the sequence is MGEWTILERLLEAAVQQHS. The chain crosses the membrane as a helical span at residues 20–42; that stretch reads TMIGRILLTVVVIFRILIVAIVG. Residues 43–75 are Extracellular-facing; it reads ETVYDDEQTMFVCNTLQPGCNQACYDRAFPISH. A helical membrane pass occupies residues 76–98; it reads IRYWVFQIIMVCTPSLCFITYSV. Topologically, residues 99–197 are cytoplasmic; the sequence is HQSAKQRERR…KLRRQEGISR (99 aa). Positions 117-141 are disordered; that stretch reads DRDPPESMGGPGGTGGGGSGGGKRE. Positions 125-137 are enriched in gly residues; sequence GGPGGTGGGGSGG. The helical transmembrane segment at 198-220 threads the bilayer; it reads FYIIQVVFRNALEIGFLVGQYFL. The Extracellular portion of the chain corresponds to 221 to 252; that stretch reads YGFSVPGLYECDRYPCIKEVECYVSRPTEKTV. The chain crosses the membrane as a helical span at residues 253–275; that stretch reads FLVFMFAVSGICVVLNLAELNHL. At 276 to 321 the chain is on the cytoplasmic side; that stretch reads GWRKIKLAVRGAQAKRKSVYEIRNKDLPRVSVPNFGRTQSSDSAYV.

It belongs to the connexin family. Delta-type subfamily. As to quaternary structure, a connexon is composed of a hexamer of connexins.

The protein localises to the cell membrane. The protein resides in the cell junction. Its subcellular location is the gap junction. In terms of biological role, one gap junction consists of a cluster of closely packed pairs of transmembrane channels, the connexons, through which materials of low MW diffuse from one cell to a neighboring cell. The chain is Gap junction delta-2 protein (GJD2) from Bos taurus (Bovine).